Here is a 388-residue protein sequence, read N- to C-terminus: 3-dehydroquinate synthase (388 aa).

The protein belongs to the archaeal-type DHQ synthase family.

The catalysed reaction is 2-amino-2,3,7-trideoxy-D-lyxo-hept-6-ulosonate + NAD(+) + H2O = 3-dehydroquinate + NH4(+) + NADH + H(+). In terms of biological role, catalyzes the oxidative deamination and cyclization of 2-amino-3,7-dideoxy-D-threo-hept-6-ulosonic acid (ADH) to yield 3-dehydroquinate (DHQ), which is fed into the canonical shikimic pathway of aromatic amino acid biosynthesis. This chain is 3-dehydroquinate synthase, found in Haloarcula marismortui (strain ATCC 43049 / DSM 3752 / JCM 8966 / VKM B-1809) (Halobacterium marismortui).